Here is a 188-residue protein sequence, read N- to C-terminus: Elongation factor P (188 aa).

Residue Lys-34 is modified to N6-(3,6-diaminohexanoyl)-5-hydroxylysine.

It belongs to the elongation factor P family. May be beta-lysylated on the epsilon-amino group of Lys-34 by the combined action of EpmA and EpmB, and then hydroxylated on the C5 position of the same residue by EpmC (if this protein is present). Lysylation is critical for the stimulatory effect of EF-P on peptide-bond formation. The lysylation moiety may extend toward the peptidyltransferase center and stabilize the terminal 3-CCA end of the tRNA. Hydroxylation of the C5 position on Lys-34 may allow additional potential stabilizing hydrogen-bond interactions with the P-tRNA.

It localises to the cytoplasm. It functions in the pathway protein biosynthesis; polypeptide chain elongation. Its function is as follows. Involved in peptide bond synthesis. Alleviates ribosome stalling that occurs when 3 or more consecutive Pro residues or the sequence PPG is present in a protein, possibly by augmenting the peptidyl transferase activity of the ribosome. Modification of Lys-34 is required for alleviation. This chain is Elongation factor P, found in Coxiella burnetii (strain CbuK_Q154) (Coxiella burnetii (strain Q154)).